A 97-amino-acid chain; its full sequence is uncharacterized protein (97 aa).

This is an uncharacterized protein from Haemophilus influenzae (strain ATCC 51907 / DSM 11121 / KW20 / Rd).